A 121-amino-acid polypeptide reads, in one-letter code: Large ribosomal subunit protein bL19 (121 aa).

Belongs to the bacterial ribosomal protein bL19 family.

In terms of biological role, this protein is located at the 30S-50S ribosomal subunit interface and may play a role in the structure and function of the aminoacyl-tRNA binding site. The sequence is that of Large ribosomal subunit protein bL19 from Legionella pneumophila (strain Paris).